Here is a 438-residue protein sequence, read N- to C-terminus: Xylose isomerase (438 aa).

Active-site residues include H102 and D105. Residues E233, E269, H272, D297, D308, D310, and D340 each coordinate Mg(2+).

The protein belongs to the xylose isomerase family. As to quaternary structure, homotetramer. Mg(2+) is required as a cofactor.

It is found in the cytoplasm. The enzyme catalyses alpha-D-xylose = alpha-D-xylulofuranose. This chain is Xylose isomerase, found in Solibacter usitatus (strain Ellin6076).